We begin with the raw amino-acid sequence, 355 residues long: Guanine nucleotide-binding protein G(z) subunit alpha (355 aa).

The segment covering 1–14 has biased composition (basic and acidic residues); the sequence is MGCRQSSEEKEAAR. The interval 1 to 26 is disordered; the sequence is MGCRQSSEEKEAARRSRRIDRHLRSE. G2 carries the N-myristoyl glycine lipid modification. The S-palmitoyl cysteine moiety is linked to residue C3. The region spanning 32–355 is the G-alpha domain; it reads REIKLLLLGT…QNNLKYIGLC (324 aa). The segment at 35–48 is G1 motif; the sequence is KLLLLGTSNSGKST. GTP-binding positions include 40 to 47, 176 to 182, 201 to 205, 270 to 273, and A327; these read GTSNSGKS, LRSRDMT, DVGGQ, and NKKD. S47 and T182 together coordinate Mg(2+). Residues 174 to 182 form a G2 motif region; it reads DILRSRDMT. Residues 197 to 206 form a G3 motif region; sequence FKMVDVGGQR. The interval 266-273 is G4 motif; it reads ILFLNKKD. A G5 motif region spans residues 325–330; the sequence is TCATDT.

It belongs to the G-alpha family. G(i/o/t/z) subfamily. As to quaternary structure, G-proteins are composed of 3 units; alpha, beta and gamma. The alpha chain contains the guanine nucleotide binding site. Interacts with ADGRB2.

The protein resides in the membrane. Its function is as follows. Guanine nucleotide-binding proteins (G proteins) are involved as modulators or transducers in various transmembrane signaling systems. The protein is Guanine nucleotide-binding protein G(z) subunit alpha (Gnaz) of Mus musculus (Mouse).